A 349-amino-acid chain; its full sequence is Succinylglutamate desuccinylase (349 aa).

His-70, Glu-73, and His-166 together coordinate Zn(2+). Glu-229 is a catalytic residue.

This sequence belongs to the AspA/AstE family. Succinylglutamate desuccinylase subfamily. It depends on Zn(2+) as a cofactor.

It carries out the reaction N-succinyl-L-glutamate + H2O = L-glutamate + succinate. It functions in the pathway amino-acid degradation; L-arginine degradation via AST pathway; L-glutamate and succinate from L-arginine: step 5/5. Functionally, transforms N(2)-succinylglutamate into succinate and glutamate. This is Succinylglutamate desuccinylase from Burkholderia mallei (strain ATCC 23344).